The sequence spans 276 residues: Large ribosomal subunit protein uL2 (276 aa).

2 disordered regions span residues 37–59 and 225–276; these read QFQKSGRNNNGHITTRHKGGGHK and VMNP…RHKR. Residues 39 to 49 show a composition bias toward polar residues; the sequence is QKSGRNNNGHI. Positions 50 to 59 are enriched in basic residues; sequence TTRHKGGGHK.

The protein belongs to the universal ribosomal protein uL2 family. Part of the 50S ribosomal subunit. Forms a bridge to the 30S subunit in the 70S ribosome.

One of the primary rRNA binding proteins. Required for association of the 30S and 50S subunits to form the 70S ribosome, for tRNA binding and peptide bond formation. It has been suggested to have peptidyltransferase activity; this is somewhat controversial. Makes several contacts with the 16S rRNA in the 70S ribosome. This Cupriavidus pinatubonensis (strain JMP 134 / LMG 1197) (Cupriavidus necator (strain JMP 134)) protein is Large ribosomal subunit protein uL2.